A 362-amino-acid polypeptide reads, in one-letter code: Serine/threonine-protein kinase SBK2 (362 aa).

Residues 1 to 11 (MPGKQSEDKPM) are compositionally biased toward basic and acidic residues. Residues 1-26 (MPGKQSEDKPMEVSTVEDGGDEGLGG) form a disordered region. A Protein kinase domain is found at 62–330 (YEEVRPLGQG…IKSYLGQPWK (269 aa)). ATP-binding positions include 68–76 (LGQGRFGRV) and K91. The active-site Proton acceptor is D183. The disordered stretch occupies residues 329-362 (WKQREGEAEELATELREDGWRGGQEAAKGEQPAC).

This sequence belongs to the protein kinase superfamily. Ser/Thr protein kinase family. STKL subfamily.

It carries out the reaction L-seryl-[protein] + ATP = O-phospho-L-seryl-[protein] + ADP + H(+). The catalysed reaction is L-threonyl-[protein] + ATP = O-phospho-L-threonyl-[protein] + ADP + H(+). The sequence is that of Serine/threonine-protein kinase SBK2 (Sbk2) from Mus musculus (Mouse).